Reading from the N-terminus, the 543-residue chain is MTKFIFVTGGVVSSLGKGIAAASLGSLLEARGLKVSMLKMDPYINVDPGTMSPLQHGEVFVTDDGAETDLDLGHYERFVQRNFTKRNSFSTGQVYEKVIRNERRGDYLGGTVQVIPHITDEIKHRIKLAAAGADVALVEVGGTVGDIESLPFLEAIRQLGVEVGRDRAMFMHLTLLPYIAVAGEVKTKPTQHSVKELRSIGIQPDILICRSERPLEESEKRKIALFTNVEEKAVINSLDARTIYEVPRMLHEQGLDRLVTDRFRIDAPVADLSDWDDVVQAQLNPEKSVEIAMVGKYVDLTEAYKSLIEALIHGGIQTKTQVNIHYIDSEDLEKDGIGSIEKMDAILVPGGFGERGVEGKIAAIQFARENNVPYLGICLGMQMAVVEFARHVAGLPSAHSTELDPKTKTPVVALITEWTDENGQLVERDEKADLGGTMRLGGQSCALVEGSKMRDIYGEDVIRERHRHRYEVNDGYIAKLEAAGLKISGRSEDGNLVETVEIEDHPWFVACQFHPEFTSTPRNGHPLFKAFVEAASQHKQTTH.

Positions 1 to 265 (MTKFIFVTGG…DRLVTDRFRI (265 aa)) are amidoligase domain. Residue serine 13 participates in CTP binding. Residue serine 13 coordinates UTP. ATP is bound by residues 14–19 (SLGKGI) and aspartate 71. Residues aspartate 71 and glutamate 139 each contribute to the Mg(2+) site. CTP-binding positions include 146-148 (DIE), 186-191 (KTKPTQ), and lysine 222. UTP contacts are provided by residues 186–191 (KTKPTQ) and lysine 222. A Glutamine amidotransferase type-1 domain is found at 290 to 541 (EIAMVGKYVD…VEAASQHKQT (252 aa)). Glycine 351 lines the L-glutamine pocket. Cysteine 378 serves as the catalytic Nucleophile; for glutamine hydrolysis. L-glutamine-binding positions include 379–382 (LGMQ), glutamate 402, and arginine 469. Catalysis depends on residues histidine 514 and glutamate 516.

Belongs to the CTP synthase family. As to quaternary structure, homotetramer.

It carries out the reaction UTP + L-glutamine + ATP + H2O = CTP + L-glutamate + ADP + phosphate + 2 H(+). It catalyses the reaction L-glutamine + H2O = L-glutamate + NH4(+). The enzyme catalyses UTP + NH4(+) + ATP = CTP + ADP + phosphate + 2 H(+). The protein operates within pyrimidine metabolism; CTP biosynthesis via de novo pathway; CTP from UDP: step 2/2. With respect to regulation, allosterically activated by GTP, when glutamine is the substrate; GTP has no effect on the reaction when ammonia is the substrate. The allosteric effector GTP functions by stabilizing the protein conformation that binds the tetrahedral intermediate(s) formed during glutamine hydrolysis. Inhibited by the product CTP, via allosteric rather than competitive inhibition. In terms of biological role, catalyzes the ATP-dependent amination of UTP to CTP with either L-glutamine or ammonia as the source of nitrogen. Regulates intracellular CTP levels through interactions with the four ribonucleotide triphosphates. This chain is CTP synthase, found in Hydrogenovibrio crunogenus (strain DSM 25203 / XCL-2) (Thiomicrospira crunogena).